Here is a 214-residue protein sequence, read N- to C-terminus: Acetoin utilization protein AcuB (214 aa).

CBS domains lie at M7–R66 and M78–Q135.

As to quaternary structure, interacts with YabA.

It participates in ketone degradation; acetoin degradation. Functionally, role in growth and sporulation on acetoin or butanediol. Involved in the breakdown of these compounds used as a carbon source. In Bacillus subtilis (strain 168), this protein is Acetoin utilization protein AcuB (acuB).